Consider the following 248-residue polypeptide: MALLEICCYSMECALTAQQNGADRVELCAAPKEGGLTPSLGVLKSVRQRVTIPVHPIIRPRGGDFCYSDGEFAAILEDVRTVRELGFPGLVTGVLDVDGNVDMPRMEKIMAAAGPLAVTFHRAFDMCANPLNTLNNLAELGIARVLTSGQKSDALQGLSKIMELIAHRDAPIIMAGAGVRAENLHHFLDAGVLEVHSSAGAWQASPMRYRNQGLSMSSDAHADEYSRYVVDGAAVAEMKGIIERHQAK.

The protein belongs to the CutC family. Homodimer.

The protein resides in the cytoplasm. The polypeptide is PF03932 family protein CutC (Escherichia coli O9:H4 (strain HS)).